The primary structure comprises 30 residues: Vitri peptide A (30 aa).

The cyclopeptide (Gly-Asn) cross-link spans 1–30 (GIPCGESCVWIPCITSAIGCSCKSKVCYRN). 3 disulfide bridges follow: C4–C20, C8–C22, and C13–C27.

Post-translationally, this is a cyclic peptide.

Functionally, probably participates in a plant defense mechanism. Has strong cytotoxic activity against human lymphoma U-937 GTB and human myeloma RPMI-8226/s cell lines. This is Vitri peptide A from Viola arvensis (European field pansy).